A 325-amino-acid polypeptide reads, in one-letter code: Cln5-like protein 2 (325 aa).

The N-terminal stretch at 1 to 19 (MNKLIFIIICLGIVDKTIS) is a signal peptide. 8 N-linked (GlcNAc...) asparagine glycosylation sites follow: Asn-88, Asn-117, Asn-133, Asn-163, Asn-182, Asn-189, Asn-238, and Asn-262.

The protein belongs to the CLN5 family.

This is Cln5-like protein 2 (cln5lb) from Dictyostelium discoideum (Social amoeba).